The sequence spans 316 residues: MNITHRPVLLAEAVTALISGPLIQEKNAAKKIVVIDGTFGRGGHTQALLKSLEMSARVISFDKDLDAISVAQQIQDPRFTIVHDSFAHMDQYAQAESVDGILLDLGISSPQVDEAHRGFSFRREGPLDMRMNTDQGLTAAEWLEQAPQEEITRVIKTYGEERFAFQIAKAIVAKREEGLSPKTTTELASLVASVVRTREAGQDPATRTFQALRIFINRELEDLELGLKAALKLLKPGARLAVISFHSLEDRIVKQFFQAHAKVEIPRGLPVREKDLPQSALEIIGRVKPSDLEISENPRARSAIMRVAEKRMGAPV.

S-adenosyl-L-methionine-binding positions include 42 to 44 (GGH), Asp-62, Phe-86, Asp-104, and Gln-111.

Belongs to the methyltransferase superfamily. RsmH family.

It is found in the cytoplasm. It carries out the reaction cytidine(1402) in 16S rRNA + S-adenosyl-L-methionine = N(4)-methylcytidine(1402) in 16S rRNA + S-adenosyl-L-homocysteine + H(+). Functionally, specifically methylates the N4 position of cytidine in position 1402 (C1402) of 16S rRNA. In Polynucleobacter asymbioticus (strain DSM 18221 / CIP 109841 / QLW-P1DMWA-1) (Polynucleobacter necessarius subsp. asymbioticus), this protein is Ribosomal RNA small subunit methyltransferase H.